A 583-amino-acid chain; its full sequence is uncharacterized protein (583 aa).

A nucleoside 3',5'-cyclic phosphate is bound at residue 24–140; sequence ILADIDDEQL…SAMLRAMARM (117 aa). Residues 309-469 enclose the PNPLA domain; it reads LVMAGGGARG…LNNLPANVMC (161 aa). The GXGXXG signature appears at 313-318; that stretch reads GGGARG. Residues 340 to 344 carry the GXSXG motif; it reads GTSSG. The active-site Nucleophile is the Ser-342. The active-site Proton acceptor is the Asp-456. Residues 456–458 carry the DGA/G motif; it reads DGG.

It belongs to the NTE family.

This is an uncharacterized protein from Mycobacterium bovis (strain ATCC BAA-935 / AF2122/97).